The primary structure comprises 252 residues: Imidazole glycerol phosphate synthase subunit HisF (252 aa).

Active-site residues include D11 and D130.

This sequence belongs to the HisA/HisF family. Heterodimer of HisH and HisF.

Its subcellular location is the cytoplasm. The catalysed reaction is 5-[(5-phospho-1-deoxy-D-ribulos-1-ylimino)methylamino]-1-(5-phospho-beta-D-ribosyl)imidazole-4-carboxamide + L-glutamine = D-erythro-1-(imidazol-4-yl)glycerol 3-phosphate + 5-amino-1-(5-phospho-beta-D-ribosyl)imidazole-4-carboxamide + L-glutamate + H(+). The protein operates within amino-acid biosynthesis; L-histidine biosynthesis; L-histidine from 5-phospho-alpha-D-ribose 1-diphosphate: step 5/9. IGPS catalyzes the conversion of PRFAR and glutamine to IGP, AICAR and glutamate. The HisF subunit catalyzes the cyclization activity that produces IGP and AICAR from PRFAR using the ammonia provided by the HisH subunit. This is Imidazole glycerol phosphate synthase subunit HisF from Thermococcus kodakarensis (strain ATCC BAA-918 / JCM 12380 / KOD1) (Pyrococcus kodakaraensis (strain KOD1)).